A 247-amino-acid chain; its full sequence is Small ribosomal subunit protein uS2 (247 aa).

The protein belongs to the universal ribosomal protein uS2 family.

The protein is Small ribosomal subunit protein uS2 of Cupriavidus metallidurans (strain ATCC 43123 / DSM 2839 / NBRC 102507 / CH34) (Ralstonia metallidurans).